A 476-amino-acid chain; its full sequence is Aspartyl/glutamyl-tRNA(Asn/Gln) amidotransferase subunit B (476 aa).

This sequence belongs to the GatB/GatE family. GatB subfamily. In terms of assembly, heterotrimer of A, B and C subunits.

The catalysed reaction is L-glutamyl-tRNA(Gln) + L-glutamine + ATP + H2O = L-glutaminyl-tRNA(Gln) + L-glutamate + ADP + phosphate + H(+). The enzyme catalyses L-aspartyl-tRNA(Asn) + L-glutamine + ATP + H2O = L-asparaginyl-tRNA(Asn) + L-glutamate + ADP + phosphate + 2 H(+). Allows the formation of correctly charged Asn-tRNA(Asn) or Gln-tRNA(Gln) through the transamidation of misacylated Asp-tRNA(Asn) or Glu-tRNA(Gln) in organisms which lack either or both of asparaginyl-tRNA or glutaminyl-tRNA synthetases. The reaction takes place in the presence of glutamine and ATP through an activated phospho-Asp-tRNA(Asn) or phospho-Glu-tRNA(Gln). This chain is Aspartyl/glutamyl-tRNA(Asn/Gln) amidotransferase subunit B, found in Neisseria meningitidis serogroup C (strain 053442).